The following is a 221-amino-acid chain: Germin-like protein 8-2 (221 aa).

A signal peptide spans 1–24; sequence MASSSFSFLLVAALLGLASWKAIA. Cysteine 34 and cysteine 49 are joined by a disulfide. Asparagine 54 and asparagine 79 each carry an N-linked (GlcNAc...) asparagine glycan. The Cupin type-1 domain maps to 64 to 215; sequence AMLDKPRDTN…AFQVDKKIID (152 aa). Positions 112, 114, 119, and 160 each coordinate Mn(2+).

It belongs to the germin family. As to quaternary structure, oligomer (believed to be a pentamer but probably hexamer).

Its subcellular location is the secreted. It localises to the extracellular space. The protein localises to the apoplast. Plays a role in broad-spectrum disease resistance. Probably has no oxalate oxidase activity even if the active site is conserved. The sequence is that of Germin-like protein 8-2 (GER3) from Oryza sativa subsp. japonica (Rice).